The primary structure comprises 435 residues: Membrane-bound ghrelin O-acyltransferase MBOAT4 (435 aa).

Residues 1 to 5 (MDWLQ) lie on the Lumenal side of the membrane. Residues 6-26 (FFFLHPVSLYQGAAFPFALLF) form a helical membrane-spanning segment. Residues 27-40 (NYLCITESFPTRAR) are Cytoplasmic-facing. The chain crosses the membrane as a helical span at residues 41 to 56 (YLFLLAGGGVLALAAM). Topologically, residues 57-59 (GPY) are lumenal. The helical transmembrane segment at 60-76 (ALLIFIPALCAVAMISS) threads the bilayer. The Cytoplasmic portion of the chain corresponds to 77-82 (LSPQEV). Residues 83-101 (HGLTFFFQMGWQTLCHLGL) form a helical membrane-spanning segment. At 102-120 (HYKEYYLCEPPPVRFYITL) the chain is on the lumenal side. A helical transmembrane segment spans residues 121 to 136 (SSLMLLTQRVTSLSLD). Over 137–206 (ISEGKVEAAW…YPSISFWALT (70 aa)) the chain is Cytoplasmic. The chain crosses the membrane as a helical span at residues 207–227 (WRGLQILGLECLKVALRRVVS). The Lumenal segment spans residues 228–240 (AGAGLDDCQRLEC). A helical membrane pass occupies residues 241-261 (IYIMWSTAGLFKLTYYSHWIL). The Cytoplasmic segment spans residues 262–324 (DDSLLHAAGF…KRLVFQRSRR (63 aa)). Active-site residues include Asn307 and His338. Residues 325–338 (WPVLQTFAFSAWWH) traverse the membrane as a helical segment. At 339–340 (GL) the chain is on the lumenal side. The helical transmembrane segment at 341–357 (HPGQVFGFLCWSVMVKA) threads the bilayer. Topologically, residues 358–376 (DYLIHTFANGCIRSWPLRL) are cytoplasmic. The chain crosses the membrane as a helical span at residues 377-397 (LYRSLTWAHTQIIIAYVMLAV). The Lumenal segment spans residues 398–407 (EGRSFSSLCR). A helical transmembrane segment spans residues 408–428 (LCCSYNSIFPVTYCLLLFLLA). Over 429–435 (RRKHKCN) the chain is Cytoplasmic.

This sequence belongs to the membrane-bound acyltransferase family. Monomer. Not glycosylated.

It is found in the endoplasmic reticulum membrane. It catalyses the reaction octanoyl-CoA + L-seryl-[protein] = O-octanoyl-L-seryl-[protein] + CoA. It carries out the reaction decanoyl-CoA + L-seryl-[protein] = O-decanoyl-L-seryl-[protein] + CoA. The catalysed reaction is L-seryl-[protein] + acetyl-CoA = O-acetyl-L-seryl-[protein] + CoA. The enzyme catalyses L-seryl-[protein] + butanoyl-CoA = O-butanoyl-L-seryl-[protein] + CoA. It catalyses the reaction pentanoyl-CoA + L-seryl-[protein] = O-pentanoyl-L-seryl-[protein] + CoA. It carries out the reaction hexanoyl-CoA + L-seryl-[protein] = O-hexanoyl-L-seryl-[protein] + CoA. The catalysed reaction is heptanoyl-CoA + L-seryl-[protein] = O-heptanoyl-L-seryl-[protein] + CoA. The enzyme catalyses nonanoyl-CoA + L-seryl-[protein] = O-nonanoyl-L-seryl-[protein] + CoA. It catalyses the reaction L-seryl-[protein] + dodecanoyl-CoA = O-dodecanoyl-L-seryl-[protein] + CoA. It carries out the reaction L-seryl-[protein] + tetradecanoyl-CoA = O-tetradecanoyl-L-seryl-[protein] + CoA. The catalysed reaction is a fatty acyl-CoA + L-seryl-[protein] = O-fatty acyl-L-seryl-[protein] + CoA. Catalyzes ghrelin acylation at 'Ser-3' using preferentially octanoyl-CoA, hexanoyl-CoA and decanoyl-CoA as acyl-CoA donors leading to ghrelin activity. In vitro uses also acyl-CoA donors of different lengths from short-chain (C2) to long-chain fatty acids (C16) knowing that acyl-CoA donors from butanoyl-CoA (C4) to dodecanoyl-CoA (C12) are more efficient compared to longer acyl-CoA donors, such as myristoyl-CoA (C14) and palmitoyl-CoA (C16) that are not efficient. This Rattus norvegicus (Rat) protein is Membrane-bound ghrelin O-acyltransferase MBOAT4.